Here is a 345-residue protein sequence, read N- to C-terminus: Dihydroorotate dehydrogenase (quinone) (345 aa).

FMN contacts are provided by residues 65–69 (AGLDK) and Thr-89. Lys-69 contributes to the substrate binding site. 114–118 (NRMGF) lines the substrate pocket. 2 residues coordinate FMN: Asn-142 and Asn-175. Residue Asn-175 participates in substrate binding. Catalysis depends on Ser-178, which acts as the Nucleophile. Asn-180 provides a ligand contact to substrate. FMN is bound by residues Lys-220 and Thr-248. 249-250 (NT) is a substrate binding site. Residues Gly-271, Gly-300, and 321 to 322 (YT) each bind FMN.

The protein belongs to the dihydroorotate dehydrogenase family. Type 2 subfamily. In terms of assembly, monomer. Requires FMN as cofactor.

It is found in the cell membrane. The enzyme catalyses (S)-dihydroorotate + a quinone = orotate + a quinol. It participates in pyrimidine metabolism; UMP biosynthesis via de novo pathway; orotate from (S)-dihydroorotate (quinone route): step 1/1. Catalyzes the conversion of dihydroorotate to orotate with quinone as electron acceptor. The chain is Dihydroorotate dehydrogenase (quinone) from Burkholderia lata (strain ATCC 17760 / DSM 23089 / LMG 22485 / NCIMB 9086 / R18194 / 383).